The primary structure comprises 226 residues: Enolase-phosphatase E1 (226 aa).

Belongs to the HAD-like hydrolase superfamily. MasA/MtnC family. Monomer. It depends on Mg(2+) as a cofactor.

It catalyses the reaction 5-methylsulfanyl-2,3-dioxopentyl phosphate + H2O = 1,2-dihydroxy-5-(methylsulfanyl)pent-1-en-3-one + phosphate. It functions in the pathway amino-acid biosynthesis; L-methionine biosynthesis via salvage pathway; L-methionine from S-methyl-5-thio-alpha-D-ribose 1-phosphate: step 3/6. It participates in amino-acid biosynthesis; L-methionine biosynthesis via salvage pathway; L-methionine from S-methyl-5-thio-alpha-D-ribose 1-phosphate: step 4/6. Bifunctional enzyme that catalyzes the enolization of 2,3-diketo-5-methylthiopentyl-1-phosphate (DK-MTP-1-P) into the intermediate 2-hydroxy-3-keto-5-methylthiopentenyl-1-phosphate (HK-MTPenyl-1-P), which is then dephosphorylated to form the acireductone 1,2-dihydroxy-3-keto-5-methylthiopentene (DHK-MTPene). The chain is Enolase-phosphatase E1 from Shewanella sp. (strain W3-18-1).